Reading from the N-terminus, the 443-residue chain is ATP-dependent protease ATPase subunit HslU (443 aa).

Residues isoleucine 19, 61–66 (GVGKTE), aspartate 256, glutamate 321, and arginine 393 each bind ATP.

This sequence belongs to the ClpX chaperone family. HslU subfamily. As to quaternary structure, a double ring-shaped homohexamer of HslV is capped on each side by a ring-shaped HslU homohexamer. The assembly of the HslU/HslV complex is dependent on binding of ATP.

The protein localises to the cytoplasm. In terms of biological role, ATPase subunit of a proteasome-like degradation complex; this subunit has chaperone activity. The binding of ATP and its subsequent hydrolysis by HslU are essential for unfolding of protein substrates subsequently hydrolyzed by HslV. HslU recognizes the N-terminal part of its protein substrates and unfolds these before they are guided to HslV for hydrolysis. This chain is ATP-dependent protease ATPase subunit HslU, found in Ralstonia pickettii (strain 12J).